The following is a 318-amino-acid chain: L-lactate dehydrogenase (318 aa).

NAD(+) is bound by residues Val18, Asp39, Lys44, Tyr69, and 83–84 (GA). Residues Gln86 and Arg92 each contribute to the substrate site. NAD(+)-binding positions include Ser105, 122–124 (VSN), and Ser147. Residue 124-127 (NPVD) participates in substrate binding. A substrate-binding site is contributed by 152 to 155 (DTSR). His179 serves as the catalytic Proton acceptor. Tyr225 carries the phosphotyrosine modification. Thr234 serves as a coordination point for substrate.

It belongs to the LDH/MDH superfamily. LDH family. As to quaternary structure, homotetramer.

The protein resides in the cytoplasm. The enzyme catalyses (S)-lactate + NAD(+) = pyruvate + NADH + H(+). The protein operates within fermentation; pyruvate fermentation to lactate; (S)-lactate from pyruvate: step 1/1. In terms of biological role, catalyzes the conversion of lactate to pyruvate. This Clostridium botulinum (strain ATCC 19397 / Type A) protein is L-lactate dehydrogenase.